Reading from the N-terminus, the 543-residue chain is Tetrahydroberberine oxidase (543 aa).

Residues 1–26 (MIPNSSSSSILSLLVLLLFSTSSSWA) form the signal peptide. Cys-37 and Cys-97 form a disulfide bridge. N-linked (GlcNAc...) asparagine glycosylation is found at Asn-54, Asn-74, Asn-135, Asn-142, Asn-162, Asn-295, Asn-335, Asn-440, and Asn-482. Positions 75 to 250 (STQKPEFIIT…LSWKVKLVPV (176 aa)) constitute an FAD-binding PCMH-type domain. A cross-link (6-(S-cysteinyl)-8alpha-(pros-histidyl)-FAD (His-Cys)) is located at residues 112–175 (HDVEGLSYVS…NTLGFPAGFC (64 aa)).

Belongs to the oxygen-dependent FAD-linked oxidoreductase family. FAD serves as cofactor. In terms of processing, the FAD cofactor is bound via a bicovalent 6-S-cysteinyl, 8alpha-N1-histidyl FAD linkage.

The catalysed reaction is (S)-canadine + 2 O2 + H(+) = berberine + 2 H2O2. Catalyzes the oxidation of different tetrahydroprotoberberines, such as (S)-canadine, (S)-scoulerine and (S)-tetrahydropalmatine. This chain is Tetrahydroberberine oxidase, found in Argemone mexicana (Mexican prickly poppy).